A 684-amino-acid polypeptide reads, in one-letter code: MAARLPIDAFGMSVIQQNGLKVYTILPTSNLSNLSDQISQNKLYAVSERHVRELDQRDKGKVKKIKFIVTSKSVDYENWFGPDTDTEIIQYLEEGGLYHALYNACKEQKSTPSFVASPSNPAPVSLKQKEILSNWKLGTIVEFCQAVGLNRTPEEPWRQLARSYGLIFISEVGALASTHVASLDADLAKFEQREQRWMKMVDYKESFAHLGTDFNRYAFCPLIPPPCPEDSEEAILIHGSWVRSEEHDGGLFVLFKRVTIMDRHQVMGARAPSEDEEESSDPTEGSMDEVTHQTETLSLDSIPPPDFSRAPVIVTGMTSAKASTSYSRDEPPEDEGNRASARPKSSPCDTCTDDSSLLQSLLSTDWVTSVSTPLHGPTLPIDAAKDLSVASESEDEVSMSQSDAPPETAMDVSANHKPNTDSAHCAPSPLPQRARKIRPTEARRRAEREKRKLKPYYRSMEECFVPACDIESYRTSVIVQPLPQNVLPFPGTQLTRETVLRKALVRECERVAPSQAPDPEELLDSDTVKICEGRAKVMYESIPSHLRGVEIESVAPESNEVSVIYPRPQISMPDNFSLGNEEERIRTYVRKRTIMERESGGYAMLRPGYGAEALEHARYVSAAGVPIPELRGQVLRSRASREMMSQTDLRLLELMMPVVNVPPEGVDKDLLAVYKATVMDILTG.

Disordered stretches follow at residues 267-353 and 388-449; these read MGAR…TCTD and SVAS…AERE. A compositionally biased stretch (polar residues) spans 316-326; sequence GMTSAKASTSY. The segment covering 438-449 has biased composition (basic and acidic residues); the sequence is RPTEARRRAERE.

This is an uncharacterized protein from Colorado tick fever virus (strain USA/Florio N-7180) (CTFV).